A 497-amino-acid chain; its full sequence is Chlorophyllide reductase 52.5 kDa chain (497 aa).

A run of 3 helical transmembrane segments spans residues 65–82 (VATV…LSFI), 126–142 (AIVV…GVPL), and 216–233 (MVIG…GPTV).

It belongs to the BchN/ChlN family. In terms of assembly, chlorophyllide reductase is composed of three subunits; BchX, BchY and BchZ. Forms a heterodimer of one BchY and one BchZ subunit.

It is found in the cell membrane. It carries out the reaction 3-deacetyl-3-vinylbacteriochlorophyllide a + 2 oxidized [2Fe-2S]-[ferredoxin] + ADP + phosphate = chlorophyllide a + 2 reduced [2Fe-2S]-[ferredoxin] + ATP + H2O + H(+). The enzyme catalyses bacteriochlorophyllide a + 2 oxidized [2Fe-2S]-[ferredoxin] + ADP + phosphate = 3-acetyl-3-devinylchlorophyllide a + 2 reduced [2Fe-2S]-[ferredoxin] + ATP + H2O + H(+). It catalyses the reaction 3-deacetyl-3-(1-hydroxyethyl)bacteriochlorophyllide a + 2 oxidized [2Fe-2S]-[ferredoxin] + ADP + phosphate = 3-devinyl-3-(1-hydroxyethyl)chlorophyllide a + 2 reduced [2Fe-2S]-[ferredoxin] + ATP + H2O + H(+). The protein operates within porphyrin-containing compound metabolism; bacteriochlorophyll biosynthesis (light-independent). Converts chlorophylls (Chl) into bacteriochlorophylls (BChl) by reducing ring B of the tetrapyrrole. This Rhodobacter capsulatus (strain ATCC BAA-309 / NBRC 16581 / SB1003) protein is Chlorophyllide reductase 52.5 kDa chain (bchY).